The sequence spans 217 residues: MKVNTKSKKVNKAWLNSHVNDPYVKAAQKDGYRARAAYKLKEIDEQLKLIRPGATVVDLGSTPGAWSQYVRRCLSPEGAAVGALNGRIISLDLLPMEPIEGVQFILGDFREEPVLAQLQEALGGGKADVVVSDMAPNLSGNGTTDAARIALLVELAVDFSIHHMKPEGALVVKLFHGGAYDDLVALFRQTFKVVKPIKPKSSRDKSSETFLVGMGLK.

S-adenosyl-L-methionine contacts are provided by G64, W66, D92, D108, and D133. Catalysis depends on K173, which acts as the Proton acceptor.

This sequence belongs to the class I-like SAM-binding methyltransferase superfamily. RNA methyltransferase RlmE family.

It is found in the cytoplasm. The catalysed reaction is uridine(2552) in 23S rRNA + S-adenosyl-L-methionine = 2'-O-methyluridine(2552) in 23S rRNA + S-adenosyl-L-homocysteine + H(+). Its function is as follows. Specifically methylates the uridine in position 2552 of 23S rRNA at the 2'-O position of the ribose in the fully assembled 50S ribosomal subunit. The sequence is that of Ribosomal RNA large subunit methyltransferase E from Delftia acidovorans (strain DSM 14801 / SPH-1).